We begin with the raw amino-acid sequence, 169 residues long: Monothiol glutaredoxin-S15, mitochondrial (169 aa).

Residues 1-37 constitute a mitochondrion transit peptide; the sequence is MAASLSSRLIKGIANLKAVRSSRLTSASVYQNGMMRF. The disordered stretch occupies residues 38–61; that stretch reads SSTVPSDSDTHDDFKPTQKVPPDS. The Glutaredoxin domain occupies 66-168; it reads KDIVENDVKD…QKLKDVSGNQ (103 aa). K83 contributes to the glutathione binding site. [2Fe-2S] cluster is bound at residue C91. Residues K120, F132, and 145–146 each bind glutathione; that span reads SD.

It belongs to the glutaredoxin family. CGFS subfamily. As to quaternary structure, [2Fe-2S]-bridged holo-homodimer. Interacts in vitro with SUFE1, BOLA1, BOLA2 and BOLA4. Interacts in vivo only with BOLA4.

The protein resides in the mitochondrion. In terms of biological role, may only reduce GSH-thiol disulfides, but not protein disulfides. Participates probably to the maturation of iron-sulfur proteins and to the regulation of the redox state of the BOLA proteins. This is Monothiol glutaredoxin-S15, mitochondrial from Arabidopsis thaliana (Mouse-ear cress).